The primary structure comprises 330 residues: MSSVKNILSFVALFAGVKTAYAGLNSPGHNNVAIYWGADVDVIPLAFAVSIKGPGGVPQINFSNQGDPCKPFPGTDLLHCPQIGEDIKTCQKKGKTILLSIGGATYSEGGFRSAEDAVAGANLLWDTFGPVKSSNSSVLRPFDDAVIDGFDLDFEATVLNMVPFAKQLRTLYDAEKSKTFYLTAAPQCPYPDLYNKEMLEGGVKFDALFIQFYNNFCGLNNFVLGSQSQDKFNFAEWDNFAKKVSANPDVKIMVGAPANKGAASSGYIDAQTLVSVINWSKTFSSFGGVMMWDASQAWANGNFTSAVKGALSAGNSRVVRMSYAGYHSGY.

The N-terminal stretch at 1 to 22 (MSSVKNILSFVALFAGVKTAYA) is a signal peptide. Residues 23–314 (GLNSPGHNNV…SAVKGALSAG (292 aa)) enclose the GH18 domain. 2 N-linked (GlcNAc...) asparagine glycosylation sites follow: Asn61 and Asn135. The active-site Proton donor is the Glu155. N-linked (GlcNAc...) asparagine glycans are attached at residues Asn278 and Asn302.

Belongs to the glycosyl hydrolase 18 family. Chitinase class III subfamily. As to quaternary structure, monomer.

It localises to the secreted. It catalyses the reaction Random endo-hydrolysis of N-acetyl-beta-D-glucosaminide (1-&gt;4)-beta-linkages in chitin and chitodextrins.. Functionally, secreted chitinase involved in the degradation of chitin, a component of the cell walls of fungi and exoskeletal elements of some animals (including worms and arthropods). Plays a morphogenetic role during apical growth, cell division and differentiation (cell wall morphogenesis). This Arthroderma benhamiae (strain ATCC MYA-4681 / CBS 112371) (Trichophyton mentagrophytes) protein is Class III chitinase ARB_03514.